The following is a 691-amino-acid chain: DNA ligase (691 aa).

NAD(+) is bound by residues 41-45 (DAEYD), 90-91 (SL), and Glu-130. Lys-132 functions as the N6-AMP-lysine intermediate in the catalytic mechanism. 4 residues coordinate NAD(+): Arg-153, Glu-190, Lys-307, and Lys-331. Residues Cys-425, Cys-428, Cys-443, and Cys-449 each coordinate Zn(2+). Positions 610–691 (APQGVLAGKT…LHQLLEGNTP (82 aa)) constitute a BRCT domain.

It belongs to the NAD-dependent DNA ligase family. LigA subfamily. It depends on Mg(2+) as a cofactor. The cofactor is Mn(2+).

It catalyses the reaction NAD(+) + (deoxyribonucleotide)n-3'-hydroxyl + 5'-phospho-(deoxyribonucleotide)m = (deoxyribonucleotide)n+m + AMP + beta-nicotinamide D-nucleotide.. In terms of biological role, DNA ligase that catalyzes the formation of phosphodiester linkages between 5'-phosphoryl and 3'-hydroxyl groups in double-stranded DNA using NAD as a coenzyme and as the energy source for the reaction. It is essential for DNA replication and repair of damaged DNA. The sequence is that of DNA ligase from Burkholderia ambifaria (strain ATCC BAA-244 / DSM 16087 / CCUG 44356 / LMG 19182 / AMMD) (Burkholderia cepacia (strain AMMD)).